The chain runs to 340 residues: HTH-type transcriptional regulator GalS (340 aa).

Positions 1–56 (MITIRDVARQAGVSVATVSRVLNNSALVSPDTRDAVMQAVTLLGYRPNANAQALAT) constitute an HTH lacI-type domain. Residues 4-23 (IRDVARQAGVSVATVSRVLN) constitute a DNA-binding region (H-T-H motif).

As to quaternary structure, homodimer.

Its function is as follows. Repressor of the mgl operon. Binds galactose and D-fucose as inducers. GalS binds to an operator DNA sequence within its own coding sequence. In Salmonella typhimurium (strain LT2 / SGSC1412 / ATCC 700720), this protein is HTH-type transcriptional regulator GalS (galS).